We begin with the raw amino-acid sequence, 416 residues long: Gamma-glutamyl phosphate reductase (416 aa).

This sequence belongs to the gamma-glutamyl phosphate reductase family.

It is found in the cytoplasm. It carries out the reaction L-glutamate 5-semialdehyde + phosphate + NADP(+) = L-glutamyl 5-phosphate + NADPH + H(+). The protein operates within amino-acid biosynthesis; L-proline biosynthesis; L-glutamate 5-semialdehyde from L-glutamate: step 2/2. In terms of biological role, catalyzes the NADPH-dependent reduction of L-glutamate 5-phosphate into L-glutamate 5-semialdehyde and phosphate. The product spontaneously undergoes cyclization to form 1-pyrroline-5-carboxylate. The protein is Gamma-glutamyl phosphate reductase of Vibrio vulnificus (strain YJ016).